A 344-amino-acid chain; its full sequence is 2,3,4,5-tetrahydropyridine-2,6-dicarboxylate N-succinyltransferase (344 aa).

Glu-205 provides a ligand contact to Mg(2+). The active-site Acyl-anhydride intermediate is the Glu-221. Succinyl-CoA is bound by residues Arg-223, Gly-238, Ser-241, Ala-264, 279–280 (EA), Gly-287, Lys-304, and 317–320 (RRNS).

Belongs to the type 2 tetrahydrodipicolinate N-succinyltransferase family. Homotrimer.

Its subcellular location is the cytoplasm. The catalysed reaction is (S)-2,3,4,5-tetrahydrodipicolinate + succinyl-CoA + H2O = (S)-2-succinylamino-6-oxoheptanedioate + CoA. It functions in the pathway amino-acid biosynthesis; L-lysine biosynthesis via DAP pathway; LL-2,6-diaminopimelate from (S)-tetrahydrodipicolinate (succinylase route): step 1/3. Functionally, catalyzes the conversion of the cyclic tetrahydrodipicolinate (THDP) into the acyclic N-succinyl-L-2-amino-6-oxopimelate using succinyl-CoA. This chain is 2,3,4,5-tetrahydropyridine-2,6-dicarboxylate N-succinyltransferase, found in Pseudomonas putida (strain ATCC 47054 / DSM 6125 / CFBP 8728 / NCIMB 11950 / KT2440).